A 358-amino-acid polypeptide reads, in one-letter code: UDP-N-acetylglucosamine--N-acetylmuramyl-(pentapeptide) pyrophosphoryl-undecaprenol N-acetylglucosamine transferase (358 aa).

Residues 11–13 (TGG), asparagine 120, arginine 161, serine 188, and glutamine 282 each bind UDP-N-acetyl-alpha-D-glucosamine.

Belongs to the glycosyltransferase 28 family. MurG subfamily.

Its subcellular location is the cell inner membrane. The catalysed reaction is di-trans,octa-cis-undecaprenyl diphospho-N-acetyl-alpha-D-muramoyl-L-alanyl-D-glutamyl-meso-2,6-diaminopimeloyl-D-alanyl-D-alanine + UDP-N-acetyl-alpha-D-glucosamine = di-trans,octa-cis-undecaprenyl diphospho-[N-acetyl-alpha-D-glucosaminyl-(1-&gt;4)]-N-acetyl-alpha-D-muramoyl-L-alanyl-D-glutamyl-meso-2,6-diaminopimeloyl-D-alanyl-D-alanine + UDP + H(+). Its pathway is cell wall biogenesis; peptidoglycan biosynthesis. Cell wall formation. Catalyzes the transfer of a GlcNAc subunit on undecaprenyl-pyrophosphoryl-MurNAc-pentapeptide (lipid intermediate I) to form undecaprenyl-pyrophosphoryl-MurNAc-(pentapeptide)GlcNAc (lipid intermediate II). This Synechococcus sp. (strain CC9311) protein is UDP-N-acetylglucosamine--N-acetylmuramyl-(pentapeptide) pyrophosphoryl-undecaprenol N-acetylglucosamine transferase.